The primary structure comprises 187 residues: Elongation factor P (187 aa).

The protein belongs to the elongation factor P family.

It localises to the cytoplasm. It functions in the pathway protein biosynthesis; polypeptide chain elongation. Its function is as follows. Involved in peptide bond synthesis. Stimulates efficient translation and peptide-bond synthesis on native or reconstituted 70S ribosomes in vitro. Probably functions indirectly by altering the affinity of the ribosome for aminoacyl-tRNA, thus increasing their reactivity as acceptors for peptidyl transferase. In Corynebacterium efficiens (strain DSM 44549 / YS-314 / AJ 12310 / JCM 11189 / NBRC 100395), this protein is Elongation factor P.